The following is a 354-amino-acid chain: UDP-N-acetylglucosamine--N-acetylmuramyl-(pentapeptide) pyrophosphoryl-undecaprenol N-acetylglucosamine transferase (354 aa).

UDP-N-acetyl-alpha-D-glucosamine is bound by residues 14-16 (TGG), asparagine 126, arginine 162, serine 190, isoleucine 243, 262-267 (ALTVSE), and glutamine 287.

Belongs to the glycosyltransferase 28 family. MurG subfamily.

The protein resides in the cell inner membrane. It carries out the reaction di-trans,octa-cis-undecaprenyl diphospho-N-acetyl-alpha-D-muramoyl-L-alanyl-D-glutamyl-meso-2,6-diaminopimeloyl-D-alanyl-D-alanine + UDP-N-acetyl-alpha-D-glucosamine = di-trans,octa-cis-undecaprenyl diphospho-[N-acetyl-alpha-D-glucosaminyl-(1-&gt;4)]-N-acetyl-alpha-D-muramoyl-L-alanyl-D-glutamyl-meso-2,6-diaminopimeloyl-D-alanyl-D-alanine + UDP + H(+). Its pathway is cell wall biogenesis; peptidoglycan biosynthesis. Functionally, cell wall formation. Catalyzes the transfer of a GlcNAc subunit on undecaprenyl-pyrophosphoryl-MurNAc-pentapeptide (lipid intermediate I) to form undecaprenyl-pyrophosphoryl-MurNAc-(pentapeptide)GlcNAc (lipid intermediate II). The polypeptide is UDP-N-acetylglucosamine--N-acetylmuramyl-(pentapeptide) pyrophosphoryl-undecaprenol N-acetylglucosamine transferase (Photobacterium profundum (strain SS9)).